The chain runs to 237 residues: KH homology domain-containing protein 1 (237 aa).

The next 2 membrane-spanning stretches (helical) occupy residues Arg-7–Gly-29 and Leu-33–Ile-50. The KH; atypical domain maps to Pro-96–Leu-155.

This sequence belongs to the KHDC1 family.

The protein localises to the membrane. This is KH homology domain-containing protein 1 from Homo sapiens (Human).